The sequence spans 933 residues: DNA repair-scaffolding protein (933 aa).

Disordered regions lie at residues 1-34 (MSGA…LRRG), 67-174 (SEKT…KGTL), and 205-224 (YSSD…IDSE). 3 stretches are compositionally biased toward basic and acidic residues: residues 16 to 29 (WHIE…ERSQ), 71 to 87 (GITE…KTET), and 119 to 132 (RDGR…RLGD). Residues 138 to 148 (PEDEDIEDELQ) show a composition bias toward acidic residues. Residues 175–469 (DISDCDSCAS…GTGWTHGHEK (295 aa)) form a necessary for interaction with RAD51 region. Residues 214–224 (DPEHSLFIDSE) are compositionally biased toward basic and acidic residues.

Found in a complex, at least composed of BLM, RAD51 and SPIDR; the complex formation is mediated by SPIDR. Interacts (via C-terminal region) with BLM; the interaction is direct. Interacts with RAD51; the interaction is direct. Interacts (via the C-terminal region) with FIGNL1 (via N-terminal one-half region); the interaction is direct.

It localises to the nucleus. Its function is as follows. Plays a role in DNA double-strand break (DBS) repair via homologous recombination (HR). Serves as a scaffolding protein that helps to promote the recruitment of DNA-processing enzymes like the helicase BLM and recombinase RAD51 to site of DNA damage, and hence contributes to maintain genomic integrity. The polypeptide is DNA repair-scaffolding protein (Spidr) (Mus musculus (Mouse)).